The chain runs to 196 residues: MIGNLSGTVDEVYGDHIILNVNDVGYIIYLSAKALNVCYIGSKIKLLIETCANNRENTTQLYGFINKEEQSCLRLLVKVSGVSYKTAMSILSKLTPEQLFLAIMNEDKIALKISGLGPKLINRIITELSGKVSKLETNNNNFYPINEDAVSALINLGYEKTKVYDTIKKYKPNLDTKDIIRTALKELSNYEIDIMQ.

Residues 1–65 form a domain I region; sequence MIGNLSGTVD…ENTTQLYGFI (65 aa). The interval 66–143 is domain II; it reads NKEEQSCLRL…KLETNNNNFY (78 aa). Positions 144–147 are flexible linker; that stretch reads PINE. A domain III region spans residues 147–196; sequence EDAVSALINLGYEKTKVYDTIKKYKPNLDTKDIIRTALKELSNYEIDIMQ.

Belongs to the RuvA family. In terms of assembly, homotetramer. Forms an RuvA(8)-RuvB(12)-Holliday junction (HJ) complex. HJ DNA is sandwiched between 2 RuvA tetramers; dsDNA enters through RuvA and exits via RuvB. An RuvB hexamer assembles on each DNA strand where it exits the tetramer. Each RuvB hexamer is contacted by two RuvA subunits (via domain III) on 2 adjacent RuvB subunits; this complex drives branch migration. In the full resolvosome a probable DNA-RuvA(4)-RuvB(12)-RuvC(2) complex forms which resolves the HJ.

Its subcellular location is the cytoplasm. Its function is as follows. The RuvA-RuvB-RuvC complex processes Holliday junction (HJ) DNA during genetic recombination and DNA repair, while the RuvA-RuvB complex plays an important role in the rescue of blocked DNA replication forks via replication fork reversal (RFR). RuvA specifically binds to HJ cruciform DNA, conferring on it an open structure. The RuvB hexamer acts as an ATP-dependent pump, pulling dsDNA into and through the RuvAB complex. HJ branch migration allows RuvC to scan DNA until it finds its consensus sequence, where it cleaves and resolves the cruciform DNA. The protein is Holliday junction branch migration complex subunit RuvA of Wolbachia sp. subsp. Brugia malayi (strain TRS).